Reading from the N-terminus, the 224-residue chain is Cell division protein SepF (224 aa).

The segment at 21–78 (DDYYEDDDRGPAPRGYRRPREDRFEDEGYAPRGYDGHPEDRRRDYDEPPAYRAGLAGG) is disordered. Over residues 54 to 66 (YDGHPEDRRRDYD) the composition is skewed to basic and acidic residues.

It belongs to the SepF family. Homodimer. Interacts with FtsZ.

The protein resides in the cytoplasm. In terms of biological role, cell division protein that is part of the divisome complex and is recruited early to the Z-ring. Probably stimulates Z-ring formation, perhaps through the cross-linking of FtsZ protofilaments. Its function overlaps with FtsA. This Mycolicibacterium gilvum (strain PYR-GCK) (Mycobacterium gilvum (strain PYR-GCK)) protein is Cell division protein SepF.